Here is a 194-residue protein sequence, read N- to C-terminus: Pyridoxal 5'-phosphate synthase subunit PdxT (194 aa).

Residue 54 to 56 (GES) coordinates L-glutamine. Residue Cys-83 is the Nucleophile of the active site. L-glutamine is bound by residues Arg-110 and 139–140 (IR). Catalysis depends on charge relay system residues His-175 and Glu-177.

This sequence belongs to the glutaminase PdxT/SNO family. As to quaternary structure, in the presence of PdxS, forms a dodecamer of heterodimers. Only shows activity in the heterodimer.

The enzyme catalyses aldehydo-D-ribose 5-phosphate + D-glyceraldehyde 3-phosphate + L-glutamine = pyridoxal 5'-phosphate + L-glutamate + phosphate + 3 H2O + H(+). It carries out the reaction L-glutamine + H2O = L-glutamate + NH4(+). It functions in the pathway cofactor biosynthesis; pyridoxal 5'-phosphate biosynthesis. Its function is as follows. Catalyzes the hydrolysis of glutamine to glutamate and ammonia as part of the biosynthesis of pyridoxal 5'-phosphate. The resulting ammonia molecule is channeled to the active site of PdxS. The sequence is that of Pyridoxal 5'-phosphate synthase subunit PdxT from Methanoregula boonei (strain DSM 21154 / JCM 14090 / 6A8).